The following is a 768-amino-acid chain: Pentatricopeptide repeat-containing protein At4g01030, mitochondrial (768 aa).

A mitochondrion-targeting transit peptide spans 1–25 (MYRFLGLTIHGGLIKRGLDNSDTRV). 16 PPR repeats span residues 22–52 (DTRVVSASMGFYGRCVSLGFANKLFDEMPKR), 53–87 (DDLAWNEIVMVNLRSGNWEKAVELFREMQFSGAKA), 88–122 (YDSTMVKLLQVCSNKEGFAEGRQIHGYVLRLGLES), 123–153 (NVSMCNSLIVMYSRNGKLELSRKVFNSMKDR), 154–188 (NLSSWNSILSSYTKLGYVDDAIGLLDEMEICGLKP), 189–223 (DIVTWNSLLSGYASKGLSKDAIAVLKRMQIAGLKP), 224–254 (STSSISSLLQAVAEPGHLKLGKAIHGYILRN), 259–289 (DVYVETTLIDMYIKTGYLPYARMVFDMMDAK), 290–324 (NIVAWNSLVSGLSYACLLKDAEALMIRMEKEGIKP), 325–359 (DAITWNSLASGYATLGKPEKALDVIGKMKEKGVAP), 360–394 (NVVSWTAIFSGCSKNGNFRNALKVFIKMQEEGVGP), 395–429 (NAATMSTLLKILGCLSLLHSGKEVHGFCLRKNLIC), 430–460 (DAYVATALVDMYGKSGDLQSAIEIFWGIKNK), 461–495 (SLASWNCMLMGYAMFGRGEEGIAAFSVMLEAGMEP), 496–526 (DAITFTSVLSVCKNSGLVQEGWKYFDLMRSR), and 532–562 (TIEHCSCMVDLLGRSGYLDEAWDFIQTMSLK). The tract at residues 567–642 (IWGAFLSSCK…QDLWSWIQID (76 aa)) is type E motif. The type E(+) motif stretch occupies residues 643–673 (QTVHIFYAEGKTHPDEGDIYFELYKLVSEMK). The segment at 674–768 (KSGYVPDTSC…DGKCSCNDSW (95 aa)) is type DYW motif.

It belongs to the PPR family. PCMP-H subfamily.

The protein localises to the mitochondrion. The polypeptide is Pentatricopeptide repeat-containing protein At4g01030, mitochondrial (PCMP-H65) (Arabidopsis thaliana (Mouse-ear cress)).